We begin with the raw amino-acid sequence, 283 residues long: Pantothenate synthetase (283 aa).

ATP is bound at residue 30–37; it reads MGTLHDGH. Histidine 37 acts as the Proton donor in catalysis. Glutamine 61 contributes to the (R)-pantoate binding site. Beta-alanine is bound at residue glutamine 61. 148-151 provides a ligand contact to ATP; that stretch reads GLKD. Residue glutamine 154 participates in (R)-pantoate binding. 185 to 188 lines the ATP pocket; that stretch reads MSSR.

Belongs to the pantothenate synthetase family. Homodimer.

The protein resides in the cytoplasm. It carries out the reaction (R)-pantoate + beta-alanine + ATP = (R)-pantothenate + AMP + diphosphate + H(+). The protein operates within cofactor biosynthesis; (R)-pantothenate biosynthesis; (R)-pantothenate from (R)-pantoate and beta-alanine: step 1/1. Catalyzes the condensation of pantoate with beta-alanine in an ATP-dependent reaction via a pantoyl-adenylate intermediate. This chain is Pantothenate synthetase, found in Leptospira biflexa serovar Patoc (strain Patoc 1 / Ames).